Here is a 125-residue protein sequence, read N- to C-terminus: MGFWKFPPFLVLSILVLYQAGMFHAAPFRSVFDGRFDPATLDEEESRLLLAAMVNDYEQMRARESEKAQKTEGSRIQKRACNTATCMTHRLAGWLSRSGSMVRSNLLPTKMGFKIFSGPRKNFWF.

An N-terminal signal peptide occupies residues 1–25 (MGFWKFPPFLVLSILVLYQAGMFHA). A propeptide spanning residues 26-77 (APFRSVFDGRFDPATLDEEESRLLLAAMVNDYEQMRARESEKAQKTEGSRIQ) is cleaved from the precursor. Cys-81 and Cys-86 are disulfide-bonded.

This sequence belongs to the calcitonin family.

It localises to the secreted. In terms of biological role, stimulates cAMP production in porcine kidney cell line LLC-PK1 via the calcitonin receptor (CT) but not via the CT-like (CL) receptor. In Capra hircus (Goat), this protein is Calcitonin receptor-stimulating peptide 1 (CRSP1).